A 458-amino-acid chain; its full sequence is Lysine-rich nucleolar protein 1 (458 aa).

The span at 1–14 shows a compositional bias: basic and acidic residues; sequence MITKTHKVDLGLPE. The tract at residues 1–21 is disordered; it reads MITKTHKVDLGLPEKKKKKKV. Residue Lys-7 forms a Glycyl lysine isopeptide (Lys-Gly) (interchain with G-Cter in SUMO2) linkage. Ser-42 and Ser-50 each carry phosphoserine. A disordered region spans residues 46-305; sequence ATSPSKSVAH…ESGVAGDPWK (260 aa). Positions 64-73 are enriched in basic residues; the sequence is VKKKKKKKKG. A Glycyl lysine isopeptide (Lys-Gly) (interchain with G-Cter in SUMO2) cross-link involves residue Lys-101. Phosphoserine is present on Ser-111. Residue Lys-130 forms a Glycyl lysine isopeptide (Lys-Gly) (interchain with G-Cter in SUMO2) linkage. Phosphoserine is present on Ser-132. Basic residues predominate over residues 145-155; the sequence is GKKLKKHKKEK. Basic and acidic residues predominate over residues 173–192; it reads EAREARDVGDTCSVGKKDEE. Over residues 198–218 the composition is skewed to basic residues; it reads QKRKRKSPREHNGKVKKKKKI. Residue Lys-249 forms a Glycyl lysine isopeptide (Lys-Gly) (interchain with G-Cter in SUMO1); alternate linkage. Residue Lys-249 forms a Glycyl lysine isopeptide (Lys-Gly) (interchain with G-Cter in SUMO2); alternate linkage. Ser-265 bears the Phosphoserine mark. Positions 265–274 are enriched in basic residues; it reads SAKKKMKSKK. Glycyl lysine isopeptide (Lys-Gly) (interchain with G-Cter in SUMO2) cross-links involve residues Lys-275, Lys-287, and Lys-305. An interaction with ZNF106 region spans residues 306–458; the sequence is EETDTDLEVV…NASKSVKLED (153 aa). Thr-308 and Thr-310 each carry phosphothreonine. Residues Lys-319, Lys-353, Lys-373, Lys-375, and Lys-407 each participate in a glycyl lysine isopeptide (Lys-Gly) (interchain with G-Cter in SUMO2) cross-link. Positions 336-353 are enriched in basic and acidic residues; the sequence is QEEIDRESGKTEASETRK. The disordered stretch occupies residues 336-355; sequence QEEIDRESGKTEASETRKWT. Position 430 is an omega-N-methylarginine (Arg-430). Residue Lys-442 forms a Glycyl lysine isopeptide (Lys-Gly) (interchain with G-Cter in SUMO2) linkage.

As to quaternary structure, interacts with ZNF106.

Its subcellular location is the nucleus. The protein resides in the nucleolus. The chain is Lysine-rich nucleolar protein 1 (KNOP1) from Homo sapiens (Human).